Here is a 382-residue protein sequence, read N- to C-terminus: Galactokinase (382 aa).

34-37 provides a ligand contact to substrate; the sequence is EHTD. 124–130 serves as a coordination point for ATP; the sequence is GAGLSSS. Mg(2+) is bound by residues serine 130 and glutamate 162. Aspartate 174 (proton acceptor) is an active-site residue. Residue tyrosine 223 coordinates substrate.

The protein belongs to the GHMP kinase family. GalK subfamily.

Its subcellular location is the cytoplasm. It carries out the reaction alpha-D-galactose + ATP = alpha-D-galactose 1-phosphate + ADP + H(+). Its pathway is carbohydrate metabolism; galactose metabolism. Functionally, catalyzes the transfer of the gamma-phosphate of ATP to D-galactose to form alpha-D-galactose-1-phosphate (Gal-1-P). The sequence is that of Galactokinase from Citrobacter koseri (strain ATCC BAA-895 / CDC 4225-83 / SGSC4696).